The primary structure comprises 151 residues: Histone H2B.1 (151 aa).

2 stretches are compositionally biased toward basic and acidic residues: residues 1–28 and 36–51; these read MAPK…EKAP and EKRL…GEGK. The interval 1–58 is disordered; it reads MAPKAEKKPAAKKPAEEEPATEKVEKAPAGKKPKAEKRLPAGKSKEGGEGKKGKKKAK. Residues Lys7 and Lys37 each carry the N6-acetyllysine modification. Residue Lys147 forms a Glycyl lysine isopeptide (Lys-Gly) (interchain with G-Cter in ubiquitin) linkage.

It belongs to the histone H2B family. As to quaternary structure, the nucleosome is a histone octamer containing two molecules each of H2A, H2B, H3 and H4 assembled in one H3-H4 heterotetramer and two H2A-H2B heterodimers. The octamer wraps approximately 147 bp of DNA. In terms of processing, can be acetylated to form H2BK6ac and H2BK33ac. Monoubiquitinated to form H2BK143ub1; may give a specific tag for epigenetic transcriptional activation.

The protein localises to the nucleus. It is found in the chromosome. In terms of biological role, core component of nucleosome. Nucleosomes wrap and compact DNA into chromatin, limiting DNA accessibility to the cellular machineries which require DNA as a template. Histones thereby play a central role in transcription regulation, DNA repair, DNA replication and chromosomal stability. DNA accessibility is regulated via a complex set of post-translational modifications of histones, also called histone code, and nucleosome remodeling. The chain is Histone H2B.1 from Zea mays (Maize).